We begin with the raw amino-acid sequence, 358 residues long: Peptide chain release factor 1 (358 aa).

At Gln-235 the chain carries N5-methylglutamine.

Belongs to the prokaryotic/mitochondrial release factor family. Methylated by PrmC. Methylation increases the termination efficiency of RF1.

It is found in the cytoplasm. Functionally, peptide chain release factor 1 directs the termination of translation in response to the peptide chain termination codons UAG and UAA. This is Peptide chain release factor 1 from Neisseria gonorrhoeae (strain NCCP11945).